An 89-amino-acid polypeptide reads, in one-letter code: Small ribosomal subunit protein uS19 (89 aa).

The protein belongs to the universal ribosomal protein uS19 family.

Its function is as follows. Protein S19 forms a complex with S13 that binds strongly to the 16S ribosomal RNA. In Parabacteroides distasonis (strain ATCC 8503 / DSM 20701 / CIP 104284 / JCM 5825 / NCTC 11152), this protein is Small ribosomal subunit protein uS19.